The primary structure comprises 1343 residues: DNA-directed RNA polymerase subunit beta (1343 aa).

The protein belongs to the RNA polymerase beta chain family. In terms of assembly, the RNAP catalytic core consists of 2 alpha, 1 beta, 1 beta' and 1 omega subunit. When a sigma factor is associated with the core the holoenzyme is formed, which can initiate transcription.

It catalyses the reaction RNA(n) + a ribonucleoside 5'-triphosphate = RNA(n+1) + diphosphate. Its function is as follows. DNA-dependent RNA polymerase catalyzes the transcription of DNA into RNA using the four ribonucleoside triphosphates as substrates. The polypeptide is DNA-directed RNA polymerase subunit beta (Haemophilus influenzae (strain PittGG)).